Consider the following 365-residue polypeptide: Cobalt-precorrin-5B C(1)-methyltransferase (365 aa).

The protein belongs to the CbiD family.

The enzyme catalyses Co-precorrin-5B + S-adenosyl-L-methionine = Co-precorrin-6A + S-adenosyl-L-homocysteine. It participates in cofactor biosynthesis; adenosylcobalamin biosynthesis; cob(II)yrinate a,c-diamide from sirohydrochlorin (anaerobic route): step 6/10. Functionally, catalyzes the methylation of C-1 in cobalt-precorrin-5B to form cobalt-precorrin-6A. The sequence is that of Cobalt-precorrin-5B C(1)-methyltransferase from Pseudomonas fluorescens (strain Pf0-1).